Consider the following 344-residue polypeptide: Mitochondrial mRNA pseudouridine synthase Rpusd3 (344 aa).

The N-terminal 36 residues, 1–36 (MGALRVLRYVSMIWRPELGSCARQRDAGFGTEARRP), are a transit peptide targeting the mitochondrion. Positions 25-53 (RDAGFGTEARRPSQPHRSSKHKDLVEDQP) are disordered.

It belongs to the pseudouridine synthase RluA family. Forms a regulatory protein-RNA complex, consisting of RCC1L, NGRN, RPUSD3, RPUSD4, TRUB2, FASTKD2 and 16S mt-rRNA.

It localises to the mitochondrion matrix. It carries out the reaction a uridine in mRNA = a pseudouridine in mRNA. In terms of biological role, catalyzes uridine to pseudouridine isomerization (pseudouridylation) of specific mitochondrial mRNAs (mt-mRNAs), a post-transcriptional modification necessary for their translation. Acts at position 390 in COXI mt-mRNA and at position 697-699 in mitochondrial COXIII mt-mRNA. As a component of a functional protein-RNA module, consisting of RCC1L, NGRN, RPUSD3, RPUSD4, TRUB2, FASTKD2 and 16S mitochondrial ribosomal RNA (16S mt-rRNA), controls 16S mt-rRNA abundance and may play a role in mitochondrial ribosome biogenesis. This chain is Mitochondrial mRNA pseudouridine synthase Rpusd3 (Rpusd3), found in Mus musculus (Mouse).